We begin with the raw amino-acid sequence, 326 residues long: MDCQEKLEVPVYTDVDKETFLRDIYPQRRPAVLKRVPIGPCVRTWTVCFLAEKGGDREVKVHVSPEPRMDFLHKNFVYRTLPFDEFIKRAAEAKHPEFFISEDESYYLRSLGEDARKEPADLRKQFPELAEDFHVPQFFEPEQFFSSVFRISSPGLQLWTHYDVMDNLLAQVTGKKRVVLYSPEDALHLYLTGDKSEVLDIDSPDLQLYPEFVKARRYECILEPGDLLFIPALWFHNTLALQFGVGVNVFWRHLPSESYDKKDPYGNKDPVAATRALQSLERTLGILDELPPDYRDFYARRMVLRIQSRAYIRKPINAAQENSDTT.

In terms of domain architecture, JmjC spans 106–268; sequence YYLRSLGEDA…YDKKDPYGNK (163 aa). Position 107 (Tyr107) interacts with 2-oxoglutarate. 2 residues coordinate Fe cation: His161 and Asp163. Residues Asn167 and Lys176 each contribute to the 2-oxoglutarate site. His236 is a binding site for Fe cation.

Belongs to the TYW5 family. As to quaternary structure, homodimer. It depends on Fe(2+) as a cofactor.

It catalyses the reaction 7-[(3S)-3-amino-3-carboxypropyl]wyosine(37) in tRNA(Phe) + 2-oxoglutarate + O2 = 7-(2-hydroxy-3-amino-3-carboxypropyl)wyosine(37) in tRNA(Phe) + succinate + CO2. It participates in tRNA modification; wybutosine-tRNA(Phe) biosynthesis. Functionally, tRNA hydroxylase that acts as a component of the wybutosine biosynthesis pathway. Wybutosine is a hyper modified guanosine with a tricyclic base found at the 3'-position adjacent to the anticodon of eukaryotic phenylalanine tRNA. Catalyzes the hydroxylation of 7-(a-amino-a-carboxypropyl)wyosine (yW-72) into undermodified hydroxywybutosine (OHyW*). OHyW* being further transformed into hydroxywybutosine (OHyW) by LCMT2/TYW4. OHyW is a derivative of wybutosine found in higher eukaryotes. The protein is tRNA wybutosine-synthesizing protein 5 (tyw5) of Danio rerio (Zebrafish).